The primary structure comprises 1268 residues: ATP-dependent helicase/nuclease subunit A (1268 aa).

Positions 3–476 (TKWTEEQELA…IMLYKNFRSR (474 aa)) constitute a UvrD-like helicase ATP-binding domain. Position 24 to 31 (24 to 31 (AAAGSGKT)) interacts with ATP. The UvrD-like helicase C-terminal domain occupies 528–824 (IENLKVAGDI…RIMSIHKSKG (297 aa)).

The protein belongs to the helicase family. AddA subfamily. As to quaternary structure, heterodimer of AddA and AddB/RexB. Mg(2+) is required as a cofactor.

The enzyme catalyses Couples ATP hydrolysis with the unwinding of duplex DNA by translocating in the 3'-5' direction.. It carries out the reaction ATP + H2O = ADP + phosphate + H(+). Its function is as follows. The heterodimer acts as both an ATP-dependent DNA helicase and an ATP-dependent, dual-direction single-stranded exonuclease. Recognizes the chi site generating a DNA molecule suitable for the initiation of homologous recombination. The AddA nuclease domain is required for chi fragment generation; this subunit has the helicase and 3' -&gt; 5' nuclease activities. In Clostridium perfringens (strain 13 / Type A), this protein is ATP-dependent helicase/nuclease subunit A.